Here is a 168-residue protein sequence, read N- to C-terminus: uncharacterized protein (168 aa).

Residues 1-10 are compositionally biased toward pro residues; that stretch reads MSPTTGPQPN. Disordered regions lie at residues 1 to 23 and 117 to 143; these read MSPT…TGPQ and EPGN…RGPQ.

This is an uncharacterized protein from Homo sapiens (Human).